The sequence spans 345 residues: DNA-directed RNA polymerase subunit alpha (345 aa).

The interval Met1–His233 is alpha N-terminal domain (alpha-NTD). The tract at residues Leu256–Gly345 is alpha C-terminal domain (alpha-CTD).

This sequence belongs to the RNA polymerase alpha chain family. Homodimer. The RNAP catalytic core consists of 2 alpha, 1 beta, 1 beta' and 1 omega subunit. When a sigma factor is associated with the core the holoenzyme is formed, which can initiate transcription.

It carries out the reaction RNA(n) + a ribonucleoside 5'-triphosphate = RNA(n+1) + diphosphate. Its function is as follows. DNA-dependent RNA polymerase catalyzes the transcription of DNA into RNA using the four ribonucleoside triphosphates as substrates. This chain is DNA-directed RNA polymerase subunit alpha, found in Syntrophus aciditrophicus (strain SB).